Here is a 329-residue protein sequence, read N- to C-terminus: Beta-ketoacyl-[acyl-carrier-protein] synthase III (329 aa).

Catalysis depends on residues Cys-123 and His-256. The ACP-binding stretch occupies residues Gln-257–Arg-261. Residue Asn-286 is part of the active site.

This sequence belongs to the thiolase-like superfamily. FabH family. Homodimer.

It localises to the cytoplasm. The catalysed reaction is malonyl-[ACP] + acetyl-CoA + H(+) = 3-oxobutanoyl-[ACP] + CO2 + CoA. It functions in the pathway lipid metabolism; fatty acid biosynthesis. Functionally, catalyzes the condensation reaction of fatty acid synthesis by the addition to an acyl acceptor of two carbons from malonyl-ACP. Catalyzes the first condensation reaction which initiates fatty acid synthesis and may therefore play a role in governing the total rate of fatty acid production. Possesses both acetoacetyl-ACP synthase and acetyl transacylase activities. Its substrate specificity determines the biosynthesis of branched-chain and/or straight-chain of fatty acids. The polypeptide is Beta-ketoacyl-[acyl-carrier-protein] synthase III (Burkholderia orbicola (strain AU 1054)).